The sequence spans 115 residues: Divalent-cation tolerance protein CutA (115 aa).

Residues Cys-19, His-86, and His-87 each contribute to the Cu cation site.

This sequence belongs to the CutA family. Homotrimer. It depends on Cu cation as a cofactor.

It is found in the cytoplasm. Its function is as follows. Involved in resistance toward heavy metals. This chain is Divalent-cation tolerance protein CutA, found in Salmonella agona (strain SL483).